The sequence spans 340 residues: Central glycolytic genes regulator (340 aa).

The H-T-H motif DNA-binding region spans 37-56 (RRSLSASLGISERVLRGEVQ). Residues 149 to 152 (GGTT), arginine 175, glutamine 185, 250 to 251 (RR), glutamate 269, and lysine 310 contribute to the beta-D-fructose 1,6-bisphosphate site.

This sequence belongs to the SorC transcriptional regulatory family. In terms of assembly, homotetramer. Binds primarily as a dimer to each half-site of the full-length operator, with much higher affinity for the right site. Then, both dimers interact, bridging the two-half sites of the operator region.

With respect to regulation, stability and function are regulated by the effector molecule fructose-1,6-bisphosphate (FBP). In the presence of glucose, binding of FBP to the low-affinity sugar-binding site of CggR disrupts dimer/dimer bridging interactions and triggers a tetramer to dimer transition, which leaves two physically independent dimers on the target DNA and allows transcription of the downstream coding sequences by the RNA polymerase. In addition, FBP and several other phosphorylated compounds can bind to a high-affinity binding-site and protect CggR against aggregation and proteolysis. In the absence of glucose, represses the transcription of the gapA operon, which encodes five key glycolytic enzymes. Binds specifically to the cggR-gapA promoter region and blocks the progression of the RNA polymerase, leading to the arrest of the transcription. This is Central glycolytic genes regulator (cggR) from Bacillus subtilis (strain 168).